A 112-amino-acid polypeptide reads, in one-letter code: Cell cycle protein GpsB (112 aa).

Residues 42–77 (YQKMADMNNEVVKLSEENHKLKKELEELRLRVATSR) adopt a coiled-coil conformation. Residues 74–96 (ATSRPQDNKNFSSNNSSSASNNV) form a disordered region. The segment covering 81–95 (NKNFSSNNSSSASNN) has biased composition (low complexity).

Belongs to the GpsB family. Forms polymers through the coiled coil domains. Interacts with PBP1, MreC and EzrA.

Its subcellular location is the cytoplasm. In terms of biological role, divisome component that associates with the complex late in its assembly, after the Z-ring is formed, and is dependent on DivIC and PBP2B for its recruitment to the divisome. Together with EzrA, is a key component of the system that regulates PBP1 localization during cell cycle progression. Its main role could be the removal of PBP1 from the cell pole after pole maturation is completed. Also contributes to the recruitment of PBP1 to the division complex. Not essential for septum formation. In Staphylococcus epidermidis (strain ATCC 12228 / FDA PCI 1200), this protein is Cell cycle protein GpsB.